Reading from the N-terminus, the 155-residue chain is SsrA-binding protein (155 aa).

Positions 135–147 (TIKRRDQERDIKK) are enriched in basic and acidic residues. The tract at residues 135–155 (TIKRRDQERDIKKQMKHYNAR) is disordered.

This sequence belongs to the SmpB family.

The protein localises to the cytoplasm. Its function is as follows. Required for rescue of stalled ribosomes mediated by trans-translation. Binds to transfer-messenger RNA (tmRNA), required for stable association of tmRNA with ribosomes. tmRNA and SmpB together mimic tRNA shape, replacing the anticodon stem-loop with SmpB. tmRNA is encoded by the ssrA gene; the 2 termini fold to resemble tRNA(Ala) and it encodes a 'tag peptide', a short internal open reading frame. During trans-translation Ala-aminoacylated tmRNA acts like a tRNA, entering the A-site of stalled ribosomes, displacing the stalled mRNA. The ribosome then switches to translate the ORF on the tmRNA; the nascent peptide is terminated with the 'tag peptide' encoded by the tmRNA and targeted for degradation. The ribosome is freed to recommence translation, which seems to be the essential function of trans-translation. The chain is SsrA-binding protein from Streptococcus pyogenes serotype M3 (strain SSI-1).